Here is a 354-residue protein sequence, read N- to C-terminus: Ribosomal RNA large subunit methyltransferase K (354 aa).

It belongs to the methyltransferase superfamily.

The protein localises to the cytoplasm. It carries out the reaction guanosine(2069) in 23S rRNA + S-adenosyl-L-methionine = N(2)-methylguanosine(2069) in 23S rRNA + S-adenosyl-L-homocysteine + H(+). Its function is as follows. Specifically methylates the guanine in position 2069 (m7G2069) of 23S rRNA. This chain is Ribosomal RNA large subunit methyltransferase K (rlmK), found in Neisseria meningitidis serogroup B (strain ATCC BAA-335 / MC58).